The following is a 140-amino-acid chain: Coiled-coil domain-containing protein 126 (140 aa).

The first 35 residues, 1–35 (MFRTISRKNMSQKLSFLLLVFGLIWGLMLLHYTLQ), serve as a signal peptide directing secretion. Asparagine 110 is a glycosylation site (N-linked (GlcNAc...) asparagine). A compositionally biased stretch (low complexity) spans 118–130 (NGTNGNLVPVTTN). Residues 118–140 (NGTNGNLVPVTTNKRTSVSGSVR) form a disordered region. Residues 131-140 (KRTSVSGSVR) are compositionally biased toward polar residues.

The protein localises to the secreted. This is Coiled-coil domain-containing protein 126 (Ccdc126) from Mus musculus (Mouse).